The following is a 370-amino-acid chain: Erythronate-4-phosphate dehydrogenase (370 aa).

Residues serine 45 and threonine 66 each coordinate substrate. Positions 142 and 169 each coordinate NAD(+). Arginine 202 is a catalytic residue. Residue aspartate 228 participates in NAD(+) binding. Residue glutamate 233 is part of the active site. Catalysis depends on histidine 250, which acts as the Proton donor. Residue glycine 253 coordinates NAD(+). Substrate is bound at residue tyrosine 254.

This sequence belongs to the D-isomer specific 2-hydroxyacid dehydrogenase family. PdxB subfamily. In terms of assembly, homodimer.

It is found in the cytoplasm. The catalysed reaction is 4-phospho-D-erythronate + NAD(+) = (R)-3-hydroxy-2-oxo-4-phosphooxybutanoate + NADH + H(+). It functions in the pathway cofactor biosynthesis; pyridoxine 5'-phosphate biosynthesis; pyridoxine 5'-phosphate from D-erythrose 4-phosphate: step 2/5. In terms of biological role, catalyzes the oxidation of erythronate-4-phosphate to 3-hydroxy-2-oxo-4-phosphonooxybutanoate. The protein is Erythronate-4-phosphate dehydrogenase of Teredinibacter turnerae (strain ATCC 39867 / T7901).